We begin with the raw amino-acid sequence, 259 residues long: Hydroxyethylthiazole kinase 1 (259 aa).

Met-38 is a substrate binding site. The ATP site is built by Arg-113 and Ser-158. Gly-185 contributes to the substrate binding site.

The protein belongs to the Thz kinase family. The cofactor is Mg(2+).

The catalysed reaction is 5-(2-hydroxyethyl)-4-methylthiazole + ATP = 4-methyl-5-(2-phosphooxyethyl)-thiazole + ADP + H(+). Its pathway is cofactor biosynthesis; thiamine diphosphate biosynthesis; 4-methyl-5-(2-phosphoethyl)-thiazole from 5-(2-hydroxyethyl)-4-methylthiazole: step 1/1. Functionally, catalyzes the phosphorylation of the hydroxyl group of 4-methyl-5-beta-hydroxyethylthiazole (THZ). The chain is Hydroxyethylthiazole kinase 1 from Leuconostoc mesenteroides subsp. mesenteroides (strain ATCC 8293 / DSM 20343 / BCRC 11652 / CCM 1803 / JCM 6124 / NCDO 523 / NBRC 100496 / NCIMB 8023 / NCTC 12954 / NRRL B-1118 / 37Y).